Here is a 506-residue protein sequence, read N- to C-terminus: 7,8-dihydro-6-hydroxymethylpterin dimethyltransferase (506 aa).

[4Fe-4S] cluster is bound by residues C73, C77, C80, C98, C102, and C105. One can recognise a Radical SAM core domain in the interval N82–D300.

This sequence belongs to the radical SAM superfamily. It depends on [4Fe-4S] cluster as a cofactor. Requires S-adenosyl-L-methionine as cofactor.

Its pathway is cofactor biosynthesis; 5,6,7,8-tetrahydromethanopterin biosynthesis. Is responsible for the addition of methyl groups at C-7 and C-9 of the pterin ring during methanopterin (MPT) biosynthesis. Catalyzes methylation of 7,8-dihydro-6-hydroxymethylpterin, likely using methylenetetrahydromethanopterin as a methyl group donor, via a radical-based mechanism. The polypeptide is 7,8-dihydro-6-hydroxymethylpterin dimethyltransferase (Methanocaldococcus jannaschii (strain ATCC 43067 / DSM 2661 / JAL-1 / JCM 10045 / NBRC 100440) (Methanococcus jannaschii)).